A 359-amino-acid polypeptide reads, in one-letter code: Putative mannose-1-phosphate guanyltransferase (359 aa).

Belongs to the transferase hexapeptide repeat family.

It carries out the reaction alpha-D-mannose 1-phosphate + GTP + H(+) = GDP-alpha-D-mannose + diphosphate. The sequence is that of Putative mannose-1-phosphate guanyltransferase (mpg1) from Sulfolobus acidocaldarius (strain ATCC 33909 / DSM 639 / JCM 8929 / NBRC 15157 / NCIMB 11770).